A 201-amino-acid polypeptide reads, in one-letter code: Protease (201 aa).

Residues H53, D70, and C121 contribute to the active site.

This sequence belongs to the peptidase C5 family. In terms of assembly, interacts with protease cofactor pVI-C; this interaction is necessary for protease activation.

It is found in the virion. The protein resides in the host nucleus. The catalysed reaction is Cleaves proteins of the adenovirus and its host cell at two consensus sites: -Yaa-Xaa-Gly-Gly-|-Xaa- and -Yaa-Xaa-Gly-Xaa-|-Gly- (in which Yaa is Met, Ile or Leu, and Xaa is any amino acid).. With respect to regulation, requires DNA and protease cofactor for maximal activation. Inside nascent virions, becomes partially activated by binding to the viral DNA, allowing it to cleave the cofactor that binds to the protease and fully activates it. Actin, like the viral protease cofactor, seems to act as a cofactor in the cleavage of cytokeratin 18 and of actin itself. Functionally, cleaves viral precursor proteins (pTP, pIIIa, pVI, pVII, pVIII, and pX) inside newly assembled particles giving rise to mature virions. Protease complexed to its cofactor slides along the viral DNA to specifically locate and cleave the viral precursors. Mature virions have a weakened organization compared to the unmature virions, thereby facilitating subsequent uncoating. Without maturation, the particle lacks infectivity and is unable to uncoat. Late in adenovirus infection, in the cytoplasm, may participate in the cytoskeleton destruction. Cleaves host cell cytoskeletal keratins K7 and K18. This chain is Protease, found in Equine adenovirus B serotype 2 (EAdV-2).